The following is a 236-amino-acid chain: Phosphoribosylaminoimidazole-succinocarboxamide synthase (236 aa).

This sequence belongs to the SAICAR synthetase family.

It carries out the reaction 5-amino-1-(5-phospho-D-ribosyl)imidazole-4-carboxylate + L-aspartate + ATP = (2S)-2-[5-amino-1-(5-phospho-beta-D-ribosyl)imidazole-4-carboxamido]succinate + ADP + phosphate + 2 H(+). It functions in the pathway purine metabolism; IMP biosynthesis via de novo pathway; 5-amino-1-(5-phospho-D-ribosyl)imidazole-4-carboxamide from 5-amino-1-(5-phospho-D-ribosyl)imidazole-4-carboxylate: step 1/2. This chain is Phosphoribosylaminoimidazole-succinocarboxamide synthase, found in Chlorobium limicola (strain DSM 245 / NBRC 103803 / 6330).